The chain runs to 101 residues: CRISPR-associated endoribonuclease Cas2 (101 aa).

A Mg(2+)-binding site is contributed by aspartate 8.

This sequence belongs to the CRISPR-associated endoribonuclease Cas2 protein family. In terms of assembly, homodimer, forms a heterotetramer with a Cas1 homodimer. It depends on Mg(2+) as a cofactor.

Functionally, CRISPR (clustered regularly interspaced short palindromic repeat), is an adaptive immune system that provides protection against mobile genetic elements (viruses, transposable elements and conjugative plasmids). CRISPR clusters contain sequences complementary to antecedent mobile elements and target invading nucleic acids. CRISPR clusters are transcribed and processed into CRISPR RNA (crRNA). Functions as a ssRNA-specific endoribonuclease. Involved in the integration of spacer DNA into the CRISPR cassette. The sequence is that of CRISPR-associated endoribonuclease Cas2 from Parvibaculum lavamentivorans (strain DS-1 / DSM 13023 / NCIMB 13966).